A 550-amino-acid polypeptide reads, in one-letter code: Neuronal acetylcholine receptor subunit alpha-9-II (550 aa).

Residues 1–20 (MRKMVPVVCFATMLLQVAHS) form the signal peptide. The Extracellular portion of the chain corresponds to 21 to 233 (AQGRYAQQLL…YTVLLQRRSS (213 aa)). The N-linked (GlcNAc...) asparagine glycan is linked to asparagine 52. A disulfide bridge connects residues cysteine 150 and cysteine 164. The N-linked (GlcNAc...) asparagine glycan is linked to asparagine 165. Cysteine 214 and cysteine 215 are disulfide-bonded. Transmembrane regions (helical) follow at residues 234–254 (FYIFNLLLPCFLISFLAPLGF), 264–284 (VSLGVTVLLALTVFQLMVAES), and 298–318 (YIATMTMITASTALTIFIMNI). Residues 319-528 (HFCGAEAKPV…WKRVAKVMDR (210 aa)) lie on the Cytoplasmic side of the membrane. The interval 357–439 (TSSSSSSSSS…HLSSSKYEGF (83 aa)) is disordered. Over residues 358–367 (SSSSSSSSSS) the composition is skewed to low complexity. Residues 413–422 (RHPKPRHQHH) show a composition bias toward basic residues. A helical transmembrane segment spans residues 529–549 (FFMWIFFIMVFLMSILIIGKA).

The protein belongs to the ligand-gated ion channel (TC 1.A.9) family. Acetylcholine receptor (TC 1.A.9.1) subfamily. In terms of tissue distribution, expressed in the brain, liver, olfactory mucosa, pituitary gland and hair cells of the saccule.

It localises to the postsynaptic cell membrane. The protein localises to the cell membrane. The polypeptide is Neuronal acetylcholine receptor subunit alpha-9-II (Oncorhynchus mykiss (Rainbow trout)).